Reading from the N-terminus, the 887-residue chain is Transcriptional regulator DEF1 (887 aa).

Positions 1–13 (MERRQFNTSNIRN) are enriched in polar residues. 8 disordered regions span residues 1–117 (MERR…IQPG), 203–293 (KRSL…ESNA), 311–330 (NNET…PRQL), 350–542 (PVLG…QQAQ), 555–578 (NRPP…PQQK), 614–675 (QAPQ…QVPK), 696–758 (QRTL…TQEQ), and 813–887 (NNAN…NLLN). A compositionally biased stretch (low complexity) spans 57 to 75 (SSSQSNSVQNQDQSEDQSQ). Polar residues predominate over residues 76–107 (LPQQESNTQQESNTQQESNTPSPRASNTSTET). Residues 199–234 (EEMRKRSLENSRKRELEEAQEREESNKRQHTESSAE) adopt a coiled-coil conformation. Positions 203–231 (KRSLENSRKRELEEAQEREESNKRQHTES) are enriched in basic and acidic residues. A compositionally biased stretch (low complexity) spans 232-254 (SAEPNAESSTESTTESNAESGAE). The span at 261-270 (AESTTESNVE) shows a compositional bias: polar residues. The span at 311–326 (NNETNNTGESNSTSQQ) shows a compositional bias: low complexity. Positions 364-393 (KTSLTGSQNKVHSTNTQQSQKHPQQILTNS) are enriched in polar residues. Composition is skewed to low complexity over residues 399–408 (QQYSAQSQQQ), 428–456 (QQQQ…QQEL), 475–519 (QQQS…QVQT), and 526–542 (QPQT…QQAQ). Positions 622 to 640 (YQHHYQQVQQRQNQQPYMQ) are enriched in low complexity. The span at 641-658 (SAPTYQQPHVQTPKSTRS) shows a compositional bias: polar residues. Positions 696-710 (QRTLDNGREPERLRT) are enriched in basic and acidic residues. A compositionally biased stretch (polar residues) spans 729 to 745 (RSKQSSNQKPVVKQQSS). The span at 829 to 844 (TNTRGGRASTRSSGRP) shows a compositional bias: low complexity. Positions 865–887 (TDGSQSQNSGKASKISNIRNLLN) are enriched in polar residues.

Its subcellular location is the nucleus. In terms of biological role, transcriptional regulator involved in extension of germ tubes into elongated hyphae and maintenance of filamentous growth. Regulates expression of UME6. Acts in a pathway that regulates maintenance of hyphal growth by repressing hyphal-to-yeast transition and allows dissemination within host epithelial tissues. Dispensable for invasion into both host oral epithelial cells and enterocytes, but required for epithelial damage. In Candida albicans (strain SC5314 / ATCC MYA-2876) (Yeast), this protein is Transcriptional regulator DEF1 (DEF1).